The following is a 1066-amino-acid chain: Zinc finger and BTB domain-containing protein 21 (1066 aa).

The 67-residue stretch at 30–96 folds into the BTB domain; the sequence is CDVLLIVGDQ…IYSSSLFVEK (67 aa). The mediates homodimerization stretch occupies residues 30 to 96; sequence CDVLLIVGDQ…IYSSSLFVEK (67 aa). Lysine 40 is covalently cross-linked (Glycyl lysine isopeptide (Lys-Gly) (interchain with G-Cter in SUMO1); alternate). Lysine 40 participates in a covalent cross-link: Glycyl lysine isopeptide (Lys-Gly) (interchain with G-Cter in SUMO2); alternate. A compositionally biased stretch (polar residues) spans 154-177; it reads SRNEAQGKTVSQNQPDVSHTSRPS. Residues 154–196 form a disordered region; that stretch reads SRNEAQGKTVSQNQPDVSHTSRPSPSIAVKANTNKPHVPKPIE. Glycyl lysine isopeptide (Lys-Gly) (interchain with G-Cter in SUMO2) cross-links involve residues lysine 255, lysine 266, lysine 273, lysine 312, and lysine 337. Phosphoserine occurs at positions 345 and 381. Lysine 383 is covalently cross-linked (Glycyl lysine isopeptide (Lys-Gly) (interchain with G-Cter in SUMO2)). Basic and acidic residues predominate over residues 388-399; that stretch reads DCSEKTALDDRP. 3 disordered regions span residues 388–442, 454–485, and 498–525; these read DCSE…DPSD, TAAA…AKRR, and KVNE…ADFP. 2 positions are modified to phosphoserine: serine 411 and serine 422. Residue lysine 430 forms a Glycyl lysine isopeptide (Lys-Gly) (interchain with G-Cter in SUMO2) linkage. Threonine 431 is modified (phosphothreonine). A phosphoserine mark is found at serine 434, serine 435, and serine 438. The segment covering 466 to 478 has biased composition (basic and acidic residues); sequence LSLKTEDDQKDMS. Residues lysine 469 and lysine 475 each participate in a glycyl lysine isopeptide (Lys-Gly) (interchain with G-Cter in SUMO2) cross-link. C2H2-type zinc fingers lie at residues 546–569 and 575–598; these read FKCK…NMYH and YACD…QTQH. Serine 605 carries the post-translational modification Phosphoserine. Glycyl lysine isopeptide (Lys-Gly) (interchain with G-Cter in SUMO2) cross-links involve residues lysine 617, lysine 643, and lysine 659. The segment at 670–692 adopts a C2H2-type 3 zinc-finger fold; it reads YICTYCGKAYRFLSQFKQHIKMH. Lysine 702 participates in a covalent cross-link: Glycyl lysine isopeptide (Lys-Gly) (interchain with G-Cter in SUMO2). Phosphoserine is present on serine 714. The segment at 748 to 770 adopts a C2H2-type 4; atypical zinc-finger fold; that stretch reads AVCPYCSLRFFSPELKQEHESKC. Residues lysine 763 and lysine 785 each participate in a glycyl lysine isopeptide (Lys-Gly) (interchain with G-Cter in SUMO2) cross-link. The C2H2-type 5 zinc-finger motif lies at 775 to 798; that stretch reads LTCLECMRTFKSSFSIWRHQVEVH. Residues 806–840 form a disordered region; sequence TENFSLPVLDHNGDVTGSSRPQSQPEPNKVNHIVT. A compositionally biased stretch (polar residues) spans 820–831; sequence VTGSSRPQSQPE. Lysine 875 is covalently cross-linked (Glycyl lysine isopeptide (Lys-Gly) (interchain with G-Cter in SUMO2)). A Glycyl lysine isopeptide (Lys-Gly) (interchain with G-Cter in SUMO1); alternate cross-link involves residue lysine 879. Lysine 879 is covalently cross-linked (Glycyl lysine isopeptide (Lys-Gly) (interchain with G-Cter in SUMO2); alternate). The tract at residues 879 to 906 is disordered; sequence KEEPVEEAEEEAPEASTAPKEAGPSKEA. The segment covering 882–891 has biased composition (acidic residues); sequence PVEEAEEEAP. The C2H2-type 6; atypical zinc-finger motif lies at 909–932; it reads WPCEKCGKMFTVHKQLERHQELLC. A Glycyl lysine isopeptide (Lys-Gly) (interchain with G-Cter in SUMO2) cross-link involves residue lysine 935. Residues 937 to 959 form a C2H2-type 7 zinc finger; that stretch reads FICHVCNKAFRTNFRLWSHFQSH. The segment at 963–1014 is disordered; it reads ASEESAHKESEVCPVPTNSPSPPPLPPPPPLPKIQPLEPDSPTGLSENPTPA. Pro residues predominate over residues 979-995; the sequence is TNSPSPPPLPPPPPLPK. Residue serine 1003 is modified to Phosphoserine. The C2H2-type 8 zinc finger occupies 1043–1065; sequence FMCKLCHRTFKTAFSLWSHEQTH.

In terms of assembly, homodimer. Interacts with ZBTB14. In terms of tissue distribution, ubiquitous in fetal and adult tissues.

The protein localises to the nucleus. In terms of biological role, acts as a transcription repressor. This Homo sapiens (Human) protein is Zinc finger and BTB domain-containing protein 21 (ZBTB21).